Here is a 458-residue protein sequence, read N- to C-terminus: Nuclear transcription factor Y subunit gamma (458 aa).

Positions 305 to 315 (QQQFSQFTDGQ) are enriched in low complexity. The tract at residues 305-379 (QQQFSQFTDG…QQSSTSPPPS (75 aa)) is disordered. Positions 339-351 (TGNSTPCTSSLPT) are enriched in polar residues.

Belongs to the NFYC/HAP5 subunit family. Heterotrimeric transcription factor composed of three components, NF-YA, NF-YB and NF-YC. NF-YB and NF-YC must interact and dimerize for NF-YA association and DNA binding.

It localises to the nucleus. Functionally, component of the sequence-specific heterotrimeric transcription factor (NF-Y) which specifically recognizes a 5'-CCAAT-3' box motif found in the promoters of its target genes. NF-Y can function as both an activator and a repressor, depending on its interacting cofactors. The polypeptide is Nuclear transcription factor Y subunit gamma (NFYC) (Homo sapiens (Human)).